We begin with the raw amino-acid sequence, 1415 residues long: MKMLDLYGYTSIAQSFDKICISIASPESIRAMSYGEIKDISTTNYRTFKVEKGGLFCPKIFGPVNDDECLCGKYRKKRYRGIVCEKCGVEVTSSKVRRERMGHIELVSPVAHVWFLKSLPSRIGALLDMPMKSIESILYSGDFVVIDPMTTPFSKGEVISESVYNQARDAYGDEGFIALTGAEAIRELLVRLDLGAIRAGLRSELESTSSEMKRKKVVKRLRIIENFIASGNRPEWMILTVIPVLPPDLRPLVSLENGRPAVSDLNHHYRTIINRNNRLEKLLKLNPPAIMIRNEKRMLQEAVDGLFDSSRRSYVSSRAGSMGYKKSLSDMLKGKQGRFRQNLLGKRVDYSGRSVIVVGPGLKLHQCGLPKKMALELFKPFICSKLKMYGVAPTVKLANKMIQSEKPEVWDVLDEVIREHPILLNRAPTLHRLGLQAFDPVLIEGKAIQLHPLVCSAFNADFDGDQMAVHVPLSLEAQLEARVLMMSTNNILSPSNGRPIIVPSKDIVLGIYYLTLQRAQAPDQEVMSFGELSHVEYALHEGIVHTSSKIKYRMQRCNSDGTIVSEVVETTPGRLILWQIFPQHKDLTFDLVNQVLTVKEITSIVDLVYRSCGQRETVEFSDKLMCLGFQYASQSGISFGCKDMIIPDTKAAHVENASEKIKEFSIQYQDGLITRSERYNKVVDEWSKCTDLIARDMMKAISLSDEEGKLNSIYMMANSGARGSASQMKQLAGMRGLMAKPSGEIIETPIISNFREGLSVFEYFNSTHGARKGLADTALKTANSGYLTRRLVDVAQDCTVVEYDCKTKDGVVARAVIEGGAVVATLDSVVLGRVAAVDTYNPVTEELLLSAGELIDEGKVEKIRVAGLDAVRVRSPLTCESKKGICSLCYGRDLAVGDLVSIGEAVGVIAAQSVGEPGTQLTMRTFHVGGTAMRGVEVSNLIAVLDAEVKLVNSNVVTDKYGNQIVMSRSCEVVLLDSVGNEKMRHSVPYGAKLYVSDGQPVKMMDKMAEWDPYTIPIITEKTGTIKYVDLIYGVSINEVLDESTGISNRVVIDWKLHLQGANLRPRLVLLDEDGNIATLYNDLEASYFVPIGAVLNVQDGQKVHAGDVITRIPRESIKTRDITGGLPRVIELFEARRPKEHAIVSDVDGYVEFGKDYYRSKRRIFIRPVDKSLPAVEYLVPKGKHTIVNEGDFVHKGDLLMDGDPDQHDILRVLGAEALASYMISEIQQVYRLQGVRIDNKHIEVILRQMLQKVEITDPGDTMYLVGEHAGREEVMRLNRKLEEAGKKPVAYVPILQGITKASLDTNSFISAASFQETTKVLTEAAFSGKEDPLYGLKENVIVGRLIPAGTGFIMNKVKKLAMLDQSDYATYYNSELREIMGDLGDELIAEGEAASPGRSGDGYLGNGGGVVDY.

Positions 69, 71, 84, and 87 each coordinate Zn(2+). Mg(2+)-binding residues include aspartate 461, aspartate 463, and aspartate 465. Zn(2+)-binding residues include cysteine 805, cysteine 879, cysteine 886, and cysteine 889.

The protein belongs to the RNA polymerase beta' chain family. The RNAP catalytic core consists of 2 alpha, 1 beta, 1 beta' and 1 omega subunit. When a sigma factor is associated with the core the holoenzyme is formed, which can initiate transcription. The cofactor is Mg(2+). It depends on Zn(2+) as a cofactor.

It catalyses the reaction RNA(n) + a ribonucleoside 5'-triphosphate = RNA(n+1) + diphosphate. Its function is as follows. DNA-dependent RNA polymerase catalyzes the transcription of DNA into RNA using the four ribonucleoside triphosphates as substrates. This chain is DNA-directed RNA polymerase subunit beta', found in Anaplasma marginale (strain Florida).